The sequence spans 596 residues: Sodium/mannose cotransporter SLC5A10 (596 aa).

At 1–15 (MAANSTSDLHTPGTQ) the chain is on the extracellular side. Residue Asn-4 is glycosylated (N-linked (GlcNAc...) asparagine). A helical transmembrane segment spans residues 16-36 (LSVADIIVITVYFALNVAVGI). The Cytoplasmic portion of the chain corresponds to 37–72 (WSSCRASRNTVNGYFLAGRDMTWWPIGASLFASSEG). A helical transmembrane segment spans residues 73-93 (SGLFIGLAGSGAAGGLAVAGF). Residues 94-99 (EWNATY) are Extracellular-facing. The N-linked (GlcNAc...) asparagine glycan is linked to Asn-96. A helical transmembrane segment spans residues 100 to 120 (VLLALAWVFVPIYISSEIVTL). Residues 121 to 149 (PEYIQKRYGGQRIRMYLSVLSLLLSVFTK) are Cytoplasmic-facing. 2 positions are modified to phosphoserine: Ser-141 and Ser-145. At Thr-148 the chain carries Phosphothreonine. A helical membrane pass occupies residues 150–170 (ISLDLYAGALFVHICLGWNFY). Residues 171–173 (LST) are Extracellular-facing. Residues 174–194 (ILTLGITALYTIAGGLAAVIY) traverse the membrane as a helical segment. The Cytoplasmic portion of the chain corresponds to 195-200 (TDALQT). A helical membrane pass occupies residues 201-221 (LIMVVGAVILTIKAFDQIGGY). Over 222–264 (GQLEAAYAQAIPSRTIANTTCHLPRTDAMHMFRDPHTGDLPWT) the chain is Extracellular. The chain crosses the membrane as a helical span at residues 265–285 (GMTFGLTIMATWYWCTDQVIV). Residues 286–300 (QRSLSARDLNHAKAG) are Cytoplasmic-facing. Residues 301 to 321 (SILASYLKMLPMGLIIMPGMI) traverse the membrane as a helical segment. The Extracellular portion of the chain corresponds to 322–355 (SRALFPDDVGCVVPSECLRACGAEVGCSNIAYPK). Residues 356–376 (LVMELMPIGLRGLMIAVMLAA) traverse the membrane as a helical segment. The Cytoplasmic segment spans residues 377-409 (LMSSLTSIFNSSSTLFTMDIWRRLRPRSGEREL). Residues 410–430 (LLVGRLVIVALIGVSVAWIPV) traverse the membrane as a helical segment. Residues 431–443 (LQDSNSGQLFIYM) are Extracellular-facing. A helical transmembrane segment spans residues 444 to 464 (QSVTSSLAPPVTAVFVLGVFW). The Cytoplasmic portion of the chain corresponds to 465-471 (RRANEQG). A helical membrane pass occupies residues 472-492 (AFWGLIAGLVVGATRLVLEFL). At 493 to 513 (NPAPPCGEPDTRPAVLGSIHY) the chain is on the extracellular side. The helical transmembrane segment at 514–534 (LHFAVALFALSGAVVVAGSLL) threads the bilayer. Over 535–575 (TPPPQSVQIENLTWWTLAQDVPLGTKAGDGQTPQKHAFWAR) the chain is Cytoplasmic. Residues 576-596 (VCGFNAILLMCVNIFFYAYFA) traverse the membrane as a helical segment.

This sequence belongs to the sodium:solute symporter (SSF) (TC 2.A.21) family. In terms of tissue distribution, predominantly expressed at high levels in kidney. Very low expression is detected in testes. As to expression, expressed in kidney. The most abundant isoform expressed in kidney.

It is found in the apical cell membrane. It catalyses the reaction D-mannose(out) + Na(+)(out) = D-mannose(in) + Na(+)(in). It carries out the reaction D-fructopyranose(out) + Na(+)(out) = D-fructopyranose(in) + Na(+)(in). Inhibited by phlorizin. Electrogenic Na+-coupled sugar symporter that actively transports D-mannose or D-fructose at the plasma membrane, with a Na+ to sugar coupling ratio of 1:1. Transporter activity is driven by a transmembrane Na+ electrochemical gradient set by the Na+/K+ pump. Exclusively recognizes sugar substrates having a pyranose ring with an axial hydroxyl group on carbon 2. Has likely evolved to enable renal reabsorption of D-mannose, an important constituent of oligosaccharide chains of glycoproteins. Contributes to dietary D-fructose reabsorption from glomerular filtrate across the brush border of the kidney. In terms of biological role, appears to have no transporter activity. The chain is Sodium/mannose cotransporter SLC5A10 (SLC5A10) from Homo sapiens (Human).